The sequence spans 347 residues: MRRSTVRAAMKLTFLGAGAWGTALASHAAANHDVVLWGRDPAQLAAIAATGSNEAYLPGVPLSPRLRVEADFEQAVGHAADDPDGLVVVATPVSGLREMTRRLAGRGNGHVRMLWLCKGFEAGTHALPHQMVREELDAAGRTSGFDYGVLTGPSFAREVALGLPCALTVAGSVPTLADCAQAAFHHHAMRIYGSDDLTGVEVGGAVKNVLAIATGASDGLGLGLNARAALVTRGLAEMTRLGLALGGRAETFMGLAGVGDLILTATGDLSRNRKVGQQLAAGQSLDQILASLGHVAEGVRCAQAVAALAEACKIEMPITRAVCAVLFEGLSAADAVAQLLQRDARDE.

Positions 20, 39, and 118 each coordinate NADPH. 3 residues coordinate sn-glycerol 3-phosphate: Lys-118, Gly-152, and Ser-154. Ala-156 contributes to the NADPH binding site. Sn-glycerol 3-phosphate is bound by residues Lys-207, Asp-260, Ser-270, Arg-271, and Asn-272. The active-site Proton acceptor is Lys-207. Arg-271 is an NADPH binding site. NADPH-binding residues include Val-295 and Glu-297.

The protein belongs to the NAD-dependent glycerol-3-phosphate dehydrogenase family.

It is found in the cytoplasm. The enzyme catalyses sn-glycerol 3-phosphate + NAD(+) = dihydroxyacetone phosphate + NADH + H(+). It carries out the reaction sn-glycerol 3-phosphate + NADP(+) = dihydroxyacetone phosphate + NADPH + H(+). Its pathway is membrane lipid metabolism; glycerophospholipid metabolism. Its function is as follows. Catalyzes the reduction of the glycolytic intermediate dihydroxyacetone phosphate (DHAP) to sn-glycerol 3-phosphate (G3P), the key precursor for phospholipid synthesis. The sequence is that of Glycerol-3-phosphate dehydrogenase [NAD(P)+] from Cupriavidus pinatubonensis (strain JMP 134 / LMG 1197) (Cupriavidus necator (strain JMP 134)).